A 222-amino-acid polypeptide reads, in one-letter code: MAKQDDASIQSPDIGEPPAAAREVFGDRLRLACDYAEFLATAGIERGLLGPREVPRIWERHILNSAVLGEVIDEGCRVVDIGSGAGLPGIPLAIARPDLKVQLLEPLLRRYNFLAEVNSQLNLGCEVVRGRAEDPAVVEALGGADVATSRAVAPLGKLTRWSLPLVKVGGAMKALKGGSVAEELERDAKEIAKAGGGDGTIELVGESKVAEPTHVITIPRIR.

Residues Gly82, Leu87, 132–133 (AE), and Arg150 contribute to the S-adenosyl-L-methionine site.

It belongs to the methyltransferase superfamily. RNA methyltransferase RsmG family.

The protein localises to the cytoplasm. Its function is as follows. Specifically methylates the N7 position of guanine in position 518 of 16S rRNA. The polypeptide is Ribosomal RNA small subunit methyltransferase G (Corynebacterium jeikeium (strain K411)).